A 287-amino-acid polypeptide reads, in one-letter code: U-megalopygitoxin(8)-Mc8 (287 aa).

A signal peptide spans 1-17; that stretch reads MYLQYLVLSLFSTTVYG.

This sequence belongs to the caterpillar 8 family. Contains 2 disulfide bonds. Expressed by the venom apparatus.

Its subcellular location is the secreted. Functionally, probable toxin. This Megalopyge crispata (Black-waved flannel moth) protein is U-megalopygitoxin(8)-Mc8.